The chain runs to 354 residues: MSLRSHLSRLLRTQVHSVRKKSVHSVAVIGAPFSQGQKRKGVEYGPAAVRXAGLMKRLSDLGCHLKDFGDLNFTPVPKDDLYNNLIVNPRSVGLANQELAEVVSRAVSGGYSCVTVGGDHSLAIGTISGHARHCPDLGVIWVDAHADINTPLTTSSGNLHGQPVSFLLRELQDKVPQLPGFSWIKPCISSPSIVYIGLRDVDPPEHFILKNYDIQYFSMRDIDRLGIQKVMEQTFDLLIGKRQRPIHLSFDIDAFDPTLAPATGTPVVGGLTYREGIYITEEIHSTGLLSALDLVEVNPRLAVSEEEAKATASLAVDVIASSFGQTREGGHIVYDQLPTPSSPDESESEERVRI.

The transit peptide at 1 to 22 (MSLRSHLSRLLRTQVHSVRKKS) directs the protein to the mitochondrion. Positions 120, 143, 145, and 147 each coordinate Mn(2+). Residues 145–149 (HADIN), 156–158 (SGN), and aspartate 202 each bind substrate. Residues aspartate 251 and aspartate 253 each coordinate Mn(2+). Substrate is bound by residues threonine 265 and glutamate 296. The interval 332–354 (IVYDQLPTPSSPDESESEERVRI) is disordered.

The protein belongs to the arginase family. As to quaternary structure, homotrimer. Mn(2+) serves as cofactor.

The protein localises to the mitochondrion. It catalyses the reaction L-arginine + H2O = urea + L-ornithine. It functions in the pathway nitrogen metabolism; urea cycle; L-ornithine and urea from L-arginine: step 1/1. May play a role in the regulation of extra-urea cycle arginine metabolism and also in down-regulation of nitric oxide synthesis. Extrahepatic arginase functions to regulate L-arginine bioavailability to nitric oxid synthase (NOS). Arginine metabolism is a critical regulator of innate and adaptive immune responses. Seems to be involved in negative regulation of the survival capacity of activated T cells. May suppress inflammation-related signaling in asthmatic airway epithelium. May play a role in promoting prenatal immune suppression. Regulates RPS6KB1 signaling, which promotes endothelial cell senescence and inflammation and implicates NOS3/eNOS dysfunction. Can inhibit endothelial autophagy independently of its enzymatic activity implicating mTORC2 signaling. Involved in vascular smooth muscle cell senescence and apoptosis independently of its enzymatic activity. This is Arginase-2, mitochondrial (ARG2) from Bos taurus (Bovine).